The primary structure comprises 226 residues: Ribonuclease 3 (226 aa).

The 123-residue stretch at 6 to 128 (INRLQRKLGY…LIGGVFLDSN (123 aa)) folds into the RNase III domain. Residue glutamate 41 participates in Mg(2+) binding. Aspartate 45 is a catalytic residue. Mg(2+) contacts are provided by aspartate 114 and glutamate 117. Glutamate 117 is a catalytic residue. In terms of domain architecture, DRBM spans 155–225 (DPKTRLQEYL…AEQVLKKLEL (71 aa)).

Belongs to the ribonuclease III family. In terms of assembly, homodimer. Mg(2+) serves as cofactor.

It is found in the cytoplasm. It carries out the reaction Endonucleolytic cleavage to 5'-phosphomonoester.. Digests double-stranded RNA. Involved in the processing of primary rRNA transcript to yield the immediate precursors to the large and small rRNAs (23S and 16S). Processes some mRNAs, and tRNAs when they are encoded in the rRNA operon. Processes pre-crRNA and tracrRNA of type II CRISPR loci if present in the organism. This Salmonella choleraesuis (strain SC-B67) protein is Ribonuclease 3.